The sequence spans 425 residues: Bifunctional phosphoribosylaminoimidazole carboxylase/phosphoribosylaminoimidazole succinocarboxamide synthetase (425 aa).

N-acetylalanine is present on Ala2. Residues 2 to 260 (ATAVVVNIGK…WVADRVELLL (259 aa)) are SAICAR synthetase domain. A Phosphotyrosine modification is found at Tyr22. The residue at position 36 (Lys36) is an N6-acetyllysine. The residue at position 107 (Ser107) is a Phosphoserine. Thr238 is subject to Phosphothreonine. Lys247 carries the N6-acetyllysine modification. Residues 261–266 (KSDSQC) are linker. The tract at residues 267–425 (RVVVLMGSTS…ADKKVRQCNL (159 aa)) is AIR carboxylase domain. Ser274 carries the post-translational modification Phosphoserine. Residue Ser332 coordinates CO2.

The protein in the N-terminal section; belongs to the SAICAR synthetase family. In the C-terminal section; belongs to the AIR carboxylase family. Class II subfamily. Homooctamer.

The enzyme catalyses 5-amino-1-(5-phospho-D-ribosyl)imidazole-4-carboxylate + L-aspartate + ATP = (2S)-2-[5-amino-1-(5-phospho-beta-D-ribosyl)imidazole-4-carboxamido]succinate + ADP + phosphate + 2 H(+). The catalysed reaction is 5-amino-1-(5-phospho-D-ribosyl)imidazole-4-carboxylate + H(+) = 5-amino-1-(5-phospho-beta-D-ribosyl)imidazole + CO2. The protein operates within purine metabolism; IMP biosynthesis via de novo pathway; 5-amino-1-(5-phospho-D-ribosyl)imidazole-4-carboxamide from 5-amino-1-(5-phospho-D-ribosyl)imidazole-4-carboxylate: step 1/2. It functions in the pathway purine metabolism; IMP biosynthesis via de novo pathway; 5-amino-1-(5-phospho-D-ribosyl)imidazole-4-carboxylate from 5-amino-1-(5-phospho-D-ribosyl)imidazole (carboxylase route): step 1/1. In terms of biological role, bifunctional phosphoribosylaminoimidazole carboxylase and phosphoribosylaminoimidazole succinocarboxamide synthetase catalyzing two reactions of the de novo purine biosynthetic pathway. This is Bifunctional phosphoribosylaminoimidazole carboxylase/phosphoribosylaminoimidazole succinocarboxamide synthetase from Mus musculus (Mouse).